Here is a 239-residue protein sequence, read N- to C-terminus: Tumor necrosis factor ligand superfamily member 14 (239 aa).

At 1 to 37 (MESVVQPSVFVVDGQTDIPFRRLEQNHRRRRCGTVQV) the chain is on the cytoplasmic side. A helical; Signal-anchor for type II membrane protein transmembrane segment spans residues 38–58 (SLALVLLLGAGLATQGWFLLR). Residues 59 to 239 (LHQRLGDIVA…TRSYFGAFMV (181 aa)) are Extracellular-facing. In terms of domain architecture, THD spans 92–239 (PAAHLTGANA…TRSYFGAFMV (148 aa)). N100 carries N-linked (GlcNAc...) asparagine glycosylation. A disulfide bond links C152 and C187. N191 is a glycosylation site (N-linked (GlcNAc...) asparagine).

It belongs to the tumor necrosis factor family. As to quaternary structure, homotrimer. Interacts with TNFRSF14. The soluble form derives from the membrane form by proteolytic processing.

It is found in the cell membrane. The protein localises to the secreted. Cytokine that binds to TNFRSF3/LTBR. Binding to the decoy receptor TNFRSF6B modulates its effects. Activates NFKB and stimulates the proliferation of T-cells. Acts as a ligand for TNFRSF14/HVEM. Upon binding to TNFRSF14/HVEM, delivers costimulatory signals to T cells, leading to T cell proliferation and IFNG production. This is Tumor necrosis factor ligand superfamily member 14 (Tnfsf14) from Mus musculus (Mouse).